Consider the following 493-residue polypeptide: MSADVSTKPRGSLPIPTAPGESNECYRVIRTLGEGAFGEVLLIVNNKNPDMAVAMKKMQITTQANTNNIRKEFLIQQKLSKVGHDNFIRAIGMRTENGFHFLFLEYADGGELFDKIEPDHGMPTAIAQFYFRQLIEGLKYIHDCDIVHRDIKPENLLLTTSHVLKISDFGMATLYRNEGKERLLDLSCGTIPYAAPEVCAGGKYRGPPIDVWSSGIVLIAMLTGELPWDRASDSSYAYLQWLGNNNLDENPWRKMDVRALCMLRRILTDNVHRRATIEQIKTDPWFTHNYGKLEMTYGRPLKRARYADENSPDCNISSTQQADAVSTAKRRHLETPDKVAHVERQNASFSQPTRTEDLLLTQNIDMSQNNTNLLERMVCRMTRFCTKFDVPTSYRQLIHASEHAGYEVRQTADNRLLVTFREVSMMVTLYSLKTESRVMVDFRRSRGDGIQFKKMFLEVRNRMNDSICVDGQNFLEDCGYVPRKPQFVREANA.

Residues 26 to 286 enclose the Protein kinase domain; the sequence is YRVIRTLGEG…IEQIKTDPWF (261 aa). Residues 32–40 and Lys56 each bind ATP; that span reads LGEGAFGEV. Asp150 functions as the Proton acceptor in the catalytic mechanism. The segment at 308–348 is disordered; sequence DENSPDCNISSTQQADAVSTAKRRHLETPDKVAHVERQNAS. Residues 312 to 324 are compositionally biased toward polar residues; sequence PDCNISSTQQADA. The segment covering 333–344 has biased composition (basic and acidic residues); sequence LETPDKVAHVER.

This sequence belongs to the protein kinase superfamily. CAMK Ser/Thr protein kinase family. NIM1 subfamily.

It localises to the cytoplasm. The protein localises to the nucleus. It carries out the reaction L-seryl-[protein] + ATP = O-phospho-L-seryl-[protein] + ADP + H(+). The catalysed reaction is L-threonyl-[protein] + ATP = O-phospho-L-threonyl-[protein] + ADP + H(+). Serine/threonine-protein kinase which is required for checkpoint-mediated cell cycle arrest and activation of DNA repair in response to the presence of DNA damage or unreplicated DNA. May also negatively regulate cell cycle progression during unperturbed cell cycles. Required for checkpoint mediated cell cycle arrest in response to DNA damage in germline cells. Essential for embryogenesis. The sequence is that of Serine/threonine-protein kinase chk-1 (chk-1) from Caenorhabditis briggsae.